The sequence spans 197 residues: dTTP/UTP pyrophosphatase (197 aa).

Aspartate 70 functions as the Proton acceptor in the catalytic mechanism.

Belongs to the Maf family. YhdE subfamily. The cofactor is a divalent metal cation.

The protein localises to the cytoplasm. The enzyme catalyses dTTP + H2O = dTMP + diphosphate + H(+). It catalyses the reaction UTP + H2O = UMP + diphosphate + H(+). Functionally, nucleoside triphosphate pyrophosphatase that hydrolyzes dTTP and UTP. May have a dual role in cell division arrest and in preventing the incorporation of modified nucleotides into cellular nucleic acids. This Yersinia pestis bv. Antiqua (strain Antiqua) protein is dTTP/UTP pyrophosphatase.